We begin with the raw amino-acid sequence, 341 residues long: Abnormal cell lineage protein 44 (341 aa).

A signal peptide spans 1 to 21 (MRALYFRTTTLSTFFILCSLA). Cystine bridges form between Cys84–Cys95, Cys134–Cys142, Cys144–Cys158, Cys206–Cys220, Cys208–Cys215, Cys265–Cys292, Cys275–Cys287, Cys291–Cys331, Cys307–Cys322, Cys309–Cys319, and Cys314–Cys315. Residue Ser212 is the site of O-palmitoleoyl serine; by mom-1 attachment. N-linked (GlcNAc...) asparagine glycosylation is present at Asn279.

The protein belongs to the Wnt family. Post-translationally, palmitoleoylation is required for efficient binding to frizzled receptors. Depalmitoleoylation leads to Wnt signaling pathway inhibition.

It localises to the secreted. It is found in the extracellular space. Its subcellular location is the extracellular matrix. Its function is as follows. Ligand for members of the frizzled family of seven transmembrane receptors. Affects male tail development, vulval precursor cell specification and egg laying. Involved in morphogenesis by influencing polarity of asymmetric cell divisions of the B, U, and F cells in the male, and the T cell in males and hermaphrodites. Controls spindle orientation in B-gamma cell division during male copulatory spicule development. Involved in specification of the P7.p lineage during vulval development. Has a role in providing polarity and default lin-17 localization in axon development and positioning of neuromuscular synapses in DA9 regions by negatively regulating synaptogenesis. In Caenorhabditis briggsae, this protein is Abnormal cell lineage protein 44.